The sequence spans 579 residues: Thiol:disulfide interchange protein DsbD (579 aa).

Residues 1 to 16 (MKKLFLFFTLIFTAFA) form the signal peptide. Cystine bridges form between Cys-124–Cys-129 and Cys-193–Cys-315. Helical transmembrane passes span 178-198 (IFGFFVLGLGLAFTPCVLPML), 230-250 (LTYTLLGLAVAAIGLPFQIAL), 254-274 (YVMIGLSILFVVLALSMFGLF), 296-316 (GAFGGAFAMGMIAGLVASPCT), 337-357 (AVTLYLLALGMGVPLMLITLF), 376-396 (FGFVMLALPVFLLSRILPEVW), 397-417 (ESRLWAGLATVFFIWFALQMS), and 420-440 (GFGYAIKIISFALAMVTVQPL). Residues 449-579 (TTTQSAVENM…AFSNWIEKLL (131 aa)) enclose the Thioredoxin domain. Cys-495 and Cys-498 form a disulfide bridge.

This sequence belongs to the thioredoxin family. DsbD subfamily.

It is found in the cell inner membrane. The catalysed reaction is [protein]-dithiol + NAD(+) = [protein]-disulfide + NADH + H(+). It carries out the reaction [protein]-dithiol + NADP(+) = [protein]-disulfide + NADPH + H(+). In terms of biological role, required to facilitate the formation of correct disulfide bonds in some periplasmic proteins and for the assembly of the periplasmic c-type cytochromes. Acts by transferring electrons from cytoplasmic thioredoxin to the periplasm. This transfer involves a cascade of disulfide bond formation and reduction steps. In Haemophilus influenzae (strain PittGG), this protein is Thiol:disulfide interchange protein DsbD.